The chain runs to 477 residues: Methylenetetrahydrofolate--tRNA-(uracil-5-)-methyltransferase TrmFO (477 aa).

Position 15–20 (15–20 (GAGLAG)) interacts with FAD.

This sequence belongs to the MnmG family. TrmFO subfamily. Requires FAD as cofactor.

Its subcellular location is the cytoplasm. The enzyme catalyses uridine(54) in tRNA + (6R)-5,10-methylene-5,6,7,8-tetrahydrofolate + NADH + H(+) = 5-methyluridine(54) in tRNA + (6S)-5,6,7,8-tetrahydrofolate + NAD(+). It catalyses the reaction uridine(54) in tRNA + (6R)-5,10-methylene-5,6,7,8-tetrahydrofolate + NADPH + H(+) = 5-methyluridine(54) in tRNA + (6S)-5,6,7,8-tetrahydrofolate + NADP(+). Its function is as follows. Catalyzes the folate-dependent formation of 5-methyl-uridine at position 54 (M-5-U54) in all tRNAs. This chain is Methylenetetrahydrofolate--tRNA-(uracil-5-)-methyltransferase TrmFO, found in Nitrobacter hamburgensis (strain DSM 10229 / NCIMB 13809 / X14).